A 536-amino-acid polypeptide reads, in one-letter code: Protein GvpD1 (536 aa).

39 to 46 (GAPGTGKT) lines the ATP pocket. Residues 352–413 (GPSDSADRYD…SDQPHPIDED (62 aa)) form a disordered region. Polar residues predominate over residues 363–372 (PDSTESFSEM). Residues 373–385 (ATTTPPDDAPTAT) are compositionally biased toward low complexity. The segment covering 386–396 (HETDGADDGSR) has biased composition (basic and acidic residues).

This sequence belongs to the gas vesicle GvpD family. Interacts with GvpE.

It is found in the cytoplasm. Functionally, causes a decrease in the amount of GvpE protein. The 5'-region of its promoter or mRNA has a repressive function on downstream genes. Gas vesicles are hollow, gas filled proteinaceous nanostructures found in several microbial planktonic microorganisms. They allow positioning of halobacteria at the optimal depth for growth in the poorly aerated, shallow brine pools of their habitat. In terms of biological role, expression of a 9.5 kb p-vac DNA fragment containing 2 divergently transcribed regions (gvpD-gvpE-gvpF-gvpG-gvpH-gvpI-gvpJ-gvpK-gvpL-gvpM and gvpA-gvpC-gvpN-gvpO) allows H.volcanii to produce gas vesicles. A similar region restores gas vesicle production in H.halobium without the p-vac locus, but it still has the c-vac locus. This chain is Protein GvpD1 (gvpD11), found in Halobacterium salinarum (strain ATCC 700922 / JCM 11081 / NRC-1) (Halobacterium halobium).